Here is a 398-residue protein sequence, read N- to C-terminus: Acetate kinase 1 (398 aa).

Asn9 provides a ligand contact to Mg(2+). Lys16 contacts ATP. Position 89 (Arg89) interacts with substrate. Residue Asp146 is the Proton donor/acceptor of the active site. ATP is bound by residues 206 to 210 (HLGNG), 281 to 283 (DCR), and 329 to 333 (GIGEN). A Mg(2+)-binding site is contributed by Glu384.

This sequence belongs to the acetokinase family. In terms of assembly, homodimer. Mg(2+) is required as a cofactor. The cofactor is Mn(2+).

The protein localises to the cytoplasm. It carries out the reaction acetate + ATP = acetyl phosphate + ADP. It functions in the pathway metabolic intermediate biosynthesis; acetyl-CoA biosynthesis; acetyl-CoA from acetate: step 1/2. In terms of biological role, catalyzes the formation of acetyl phosphate from acetate and ATP. Can also catalyze the reverse reaction. This chain is Acetate kinase 1, found in Aliivibrio fischeri (strain ATCC 700601 / ES114) (Vibrio fischeri).